Consider the following 90-residue polypeptide: Small ribosomal subunit protein uS19 (90 aa).

This sequence belongs to the universal ribosomal protein uS19 family.

In terms of biological role, protein S19 forms a complex with S13 that binds strongly to the 16S ribosomal RNA. The polypeptide is Small ribosomal subunit protein uS19 (Rhizorhabdus wittichii (strain DSM 6014 / CCUG 31198 / JCM 15750 / NBRC 105917 / EY 4224 / RW1) (Sphingomonas wittichii)).